We begin with the raw amino-acid sequence, 357 residues long: Glycerol-3-phosphate dehydrogenase [NAD(P)+] (357 aa).

S30, F31, R51, and K124 together coordinate NADPH. Residues K124 and G152 each contribute to the sn-glycerol 3-phosphate site. A156 lines the NADPH pocket. Sn-glycerol 3-phosphate-binding residues include K207, D260, S270, R271, and N272. Catalysis depends on K207, which acts as the Proton acceptor. Residue R271 participates in NADPH binding. E297 contributes to the NADPH binding site.

The protein belongs to the NAD-dependent glycerol-3-phosphate dehydrogenase family.

It localises to the cytoplasm. It catalyses the reaction sn-glycerol 3-phosphate + NAD(+) = dihydroxyacetone phosphate + NADH + H(+). It carries out the reaction sn-glycerol 3-phosphate + NADP(+) = dihydroxyacetone phosphate + NADPH + H(+). It functions in the pathway membrane lipid metabolism; glycerophospholipid metabolism. Its function is as follows. Catalyzes the reduction of the glycolytic intermediate dihydroxyacetone phosphate (DHAP) to sn-glycerol 3-phosphate (G3P), the key precursor for phospholipid synthesis. The sequence is that of Glycerol-3-phosphate dehydrogenase [NAD(P)+] from Acinetobacter baumannii (strain AB307-0294).